The chain runs to 154 residues: Ribonuclease H (154 aa).

The RNase H type-1 domain occupies 1–142 (MLKKIDLYTD…CDELAREAAS (142 aa)). Mg(2+) is bound by residues D10, E48, D70, and D134. Residues 133 to 154 (CDELAREAASGKQLAEDTGYQP) are disordered.

Belongs to the RNase H family. Monomer. It depends on Mg(2+) as a cofactor.

The protein localises to the cytoplasm. It carries out the reaction Endonucleolytic cleavage to 5'-phosphomonoester.. Its function is as follows. Endonuclease that specifically degrades the RNA of RNA-DNA hybrids. This chain is Ribonuclease H, found in Aeromonas hydrophila subsp. hydrophila (strain ATCC 7966 / DSM 30187 / BCRC 13018 / CCUG 14551 / JCM 1027 / KCTC 2358 / NCIMB 9240 / NCTC 8049).